The following is a 228-amino-acid chain: Ribulose-phosphate 3-epimerase (228 aa).

Substrate is bound at residue Ser9. Positions 34, 36, 68, and 177 each coordinate a divalent metal cation. Residue Asp36 is the Proton acceptor of the active site. Substrate-binding positions include His68, 177 to 179 (DGG), and 199 to 200 (GS). The active-site Proton donor is Asp177.

It belongs to the ribulose-phosphate 3-epimerase family. Requires a divalent metal cation as cofactor.

It carries out the reaction D-ribulose 5-phosphate = D-xylulose 5-phosphate. It participates in carbohydrate degradation. Functionally, catalyzes the reversible epimerization of D-ribulose 5-phosphate to D-xylulose 5-phosphate. The protein is Ribulose-phosphate 3-epimerase of Buchnera aphidicola subsp. Acyrthosiphon pisum (strain APS) (Acyrthosiphon pisum symbiotic bacterium).